A 112-amino-acid polypeptide reads, in one-letter code: Iron-sulfur cluster assembly protein CyaY (112 aa).

It belongs to the frataxin family.

In terms of biological role, involved in iron-sulfur (Fe-S) cluster assembly. May act as a regulator of Fe-S biogenesis. The polypeptide is Iron-sulfur cluster assembly protein CyaY (Delftia acidovorans (strain DSM 14801 / SPH-1)).